The sequence spans 73 residues: Large ribosomal subunit protein bL31 (73 aa).

The protein belongs to the bacterial ribosomal protein bL31 family. Type A subfamily. In terms of assembly, part of the 50S ribosomal subunit.

Functionally, binds the 23S rRNA. The sequence is that of Large ribosomal subunit protein bL31 from Ruegeria sp. (strain TM1040) (Silicibacter sp.).